Consider the following 301-residue polypeptide: MAFHKLVKNSAYYSRFQTKYKRRREGKTDYYARKRLITQAKNKYNAPKYRLVVRFTNRDIILQIVSSEITGDKVFASAYSHELKAYGIEHGLTNWAAAYATGLLLARRVLKKLGLDETFKGVEEADGEYKLTEAAETDDGERRPFKAFLDVGLARTSTGARVFGAMKGASDGGIFIPHSENRFPGYDMESEELDAETLKKYIFGGHVAEYMETLADDDEERYKSQFNRYIEDDLEADGLEDLYAEAHAAIREDPFKKAESEAPKKTKEEWKAESLKYKKSKLTREQRAAGVQERIAALRSE.

It belongs to the universal ribosomal protein uL18 family. As to quaternary structure, component of the large ribosomal subunit (LSU). Mature N.crassa ribosomes consist of a small (40S) and a large (60S) subunit. The 40S small subunit contains 1 molecule of ribosomal RNA (18S rRNA) and at least 32 different proteins. The large 60S subunit contains 3 rRNA molecules (26S, 5.8S and 5S rRNA) and at least 42 different proteins.

It localises to the cytoplasm. Component of the ribosome, a large ribonucleoprotein complex responsible for the synthesis of proteins in the cell. The small ribosomal subunit (SSU) binds messenger RNAs (mRNAs) and translates the encoded message by selecting cognate aminoacyl-transfer RNA (tRNA) molecules. The large subunit (LSU) contains the ribosomal catalytic site termed the peptidyl transferase center (PTC), which catalyzes the formation of peptide bonds, thereby polymerizing the amino acids delivered by tRNAs into a polypeptide chain. The nascent polypeptides leave the ribosome through a tunnel in the LSU and interact with protein factors that function in enzymatic processing, targeting, and the membrane insertion of nascent chains at the exit of the ribosomal tunnel. This Neurospora crassa (strain ATCC 24698 / 74-OR23-1A / CBS 708.71 / DSM 1257 / FGSC 987) protein is Large ribosomal subunit protein uL18 (rpl-5).